The sequence spans 628 residues: Probable alpha-L-arabinofuranosidase A (628 aa).

The signal sequence occupies residues 1-25; the sequence is MVAFSTISGLGALSLLFSIIESVDG. N-linked (GlcNAc...) asparagine glycans are attached at residues N36, N51, N74, N152, N164, N260, N359, N404, and N493.

Belongs to the glycosyl hydrolase 51 family.

It localises to the secreted. The enzyme catalyses Hydrolysis of terminal non-reducing alpha-L-arabinofuranoside residues in alpha-L-arabinosides.. It participates in glycan metabolism; L-arabinan degradation. Alpha-L-arabinofuranosidase involved in the degradation of arabinoxylan, a major component of plant hemicellulose. Acts only on small linear 1,5-alpha-linked L-arabinofuranosyl oligosaccharides. This Aspergillus terreus (strain NIH 2624 / FGSC A1156) protein is Probable alpha-L-arabinofuranosidase A (abfA).